A 289-amino-acid chain; its full sequence is Probable phosphoribulokinase (289 aa).

12–20 (GSSGAGTTT) provides a ligand contact to ATP.

This sequence belongs to the phosphoribulokinase family.

The catalysed reaction is D-ribulose 5-phosphate + ATP = D-ribulose 1,5-bisphosphate + ADP + H(+). This is Probable phosphoribulokinase (prkB) from Escherichia coli (strain K12).